A 213-amino-acid chain; its full sequence is Probable thiopurine S-methyltransferase (213 aa).

Residues Trp10, Leu45, Glu66, and Arg125 each coordinate S-adenosyl-L-methionine.

Belongs to the class I-like SAM-binding methyltransferase superfamily. TPMT family.

The protein localises to the cytoplasm. It carries out the reaction S-adenosyl-L-methionine + a thiopurine = S-adenosyl-L-homocysteine + a thiopurine S-methylether.. This is Probable thiopurine S-methyltransferase from Yarrowia lipolytica (strain CLIB 122 / E 150) (Yeast).